A 233-amino-acid polypeptide reads, in one-letter code: Large ribosomal subunit protein uL1 (233 aa).

Belongs to the universal ribosomal protein uL1 family. In terms of assembly, part of the 50S ribosomal subunit.

Functionally, binds directly to 23S rRNA. The L1 stalk is quite mobile in the ribosome, and is involved in E site tRNA release. In terms of biological role, protein L1 is also a translational repressor protein, it controls the translation of the L11 operon by binding to its mRNA. The protein is Large ribosomal subunit protein uL1 of Brucella canis (strain ATCC 23365 / NCTC 10854 / RM-666).